A 148-amino-acid polypeptide reads, in one-letter code: Transcriptional repressor NrdR (148 aa).

The segment at 3-32 is a zinc-finger region; it reads CPKCSSEESKVVDSRQAEDAIRRRRVCESC. An ATP-cone domain is found at 47 to 137; that stretch reads LLVIKKDDKR…VYRSFKDVSE (91 aa).

The protein belongs to the NrdR family. Zn(2+) is required as a cofactor.

In terms of biological role, negatively regulates transcription of bacterial ribonucleotide reductase nrd genes and operons by binding to NrdR-boxes. The polypeptide is Transcriptional repressor NrdR (Lactococcus lactis subsp. lactis (strain IL1403) (Streptococcus lactis)).